The primary structure comprises 388 residues: Succinate--CoA ligase [ADP-forming] subunit beta (388 aa).

The ATP-grasp domain occupies 9–245; that stretch reads KELLKSYGLP…KSQENERELK (237 aa). ATP is bound by residues Lys-46, 53-55, Glu-100, Tyr-103, and Glu-108; that span reads GRG. Residues Asn-200 and Asp-214 each contribute to the Mg(2+) site. Substrate contacts are provided by residues Asn-265 and 322–324; that span reads GIV.

This sequence belongs to the succinate/malate CoA ligase beta subunit family. In terms of assembly, heterotetramer of two alpha and two beta subunits. Requires Mg(2+) as cofactor.

It catalyses the reaction succinate + ATP + CoA = succinyl-CoA + ADP + phosphate. It carries out the reaction GTP + succinate + CoA = succinyl-CoA + GDP + phosphate. It functions in the pathway carbohydrate metabolism; tricarboxylic acid cycle; succinate from succinyl-CoA (ligase route): step 1/1. Its function is as follows. Succinyl-CoA synthetase functions in the citric acid cycle (TCA), coupling the hydrolysis of succinyl-CoA to the synthesis of either ATP or GTP and thus represents the only step of substrate-level phosphorylation in the TCA. The beta subunit provides nucleotide specificity of the enzyme and binds the substrate succinate, while the binding sites for coenzyme A and phosphate are found in the alpha subunit. The chain is Succinate--CoA ligase [ADP-forming] subunit beta from Psychrobacter arcticus (strain DSM 17307 / VKM B-2377 / 273-4).